Here is a 148-residue protein sequence, read N- to C-terminus: MSKASGFLKEFRDFAVKGNAIDLAVGVIIGAAFGKIVDSVVKDLIMPLVNYILGGSVDFSNKFLVLSAPDGYAGPMTYADLTKAGAIVLAWGNFLTILINFILLALVVFIIVKAINAARRKEEEAPAEPAAPPEDVVVLREIRDLLKK.

3 helical membrane passes run 21 to 41, 45 to 65, and 92 to 112; these read IDLAVGVIIGAAFGKIVDSVV, IMPLVNYILGGSVDFSNKFLV, and GNFLTILINFILLALVVFIIV.

It belongs to the MscL family. As to quaternary structure, homopentamer.

The protein localises to the cell inner membrane. Channel that opens in response to stretch forces in the membrane lipid bilayer. May participate in the regulation of osmotic pressure changes within the cell. This chain is Large-conductance mechanosensitive channel, found in Bordetella petrii (strain ATCC BAA-461 / DSM 12804 / CCUG 43448).